Consider the following 290-residue polypeptide: MKKVFYPLACCLAAGVLVSCSGQKKAGSAQEEQSANEVAVSYSKSLKAAEMDSLQLPVDADGYITIFDGKTFNGWRGYGKDRVPSKWTIEDGCIKFNGSGGGEAQDGDGGDLIFAHKFKNFELEMEWKVSKGGNSGIFYLAQEVTSKDKDGNDVLEPIYISAPEYQVLDNDNHPDAKLGKDNNRQSASLYDMIPAVPQNAKPFGEWNKAKIMVYKGTVVHGQNDENVLEYHLWTKQWTDLLQASKFSQDKWPLAFELLNNCGGENHEGFIGMQDHGDDVWFRNIRVKVLD.

Positions 1–19 are cleaved as a signal peptide; sequence MKKVFYPLACCLAAGVLVS. Cys20 carries N-palmitoyl cysteine lipidation. Residue Cys20 is the site of S-diacylglycerol cysteine attachment.

The protein resides in the cell membrane. It catalyses the reaction 3-dehydro-alpha,alpha-trehalose + H2O = 3-dehydro-D-glucose + D-glucose. Its function is as follows. 3-keto-disaccharide hydrolase that preferentially hydrolyzes 3-keto-trehalose (3-dehydro-alpha,alpha-trehalose). Important for disaccharide utilization in the human gut. Also shows hydrolysis activity with the glucosinolates glucoraphanin or glucobrassicin, but with much lower efficiency. The chain is 3-keto-disaccharide hydrolase from Bacteroides thetaiotaomicron (strain ATCC 29148 / DSM 2079 / JCM 5827 / CCUG 10774 / NCTC 10582 / VPI-5482 / E50).